The chain runs to 563 residues: Probable lysosomal cobalamin transporter (563 aa).

5 helical membrane-spanning segments follow: residues L8–I28, F40–P60, V95–A115, Y144–M164, and A188–T208. N-linked (GlcNAc...) asparagine glycosylation occurs at N228. Transmembrane regions (helical) follow at residues G314–I334, I374–V394, M416–M436, and F506–V526. The interval E537 to T563 is disordered. The span at Q539 to S551 shows a compositional bias: acidic residues.

This sequence belongs to the LIMR family. LMBRD1 subfamily.

The protein resides in the lysosome membrane. Its function is as follows. Probable lysosomal cobalamin transporter. Required to export cobalamin from lysosomes allowing its conversion to cofactors. In Neosartorya fischeri (strain ATCC 1020 / DSM 3700 / CBS 544.65 / FGSC A1164 / JCM 1740 / NRRL 181 / WB 181) (Aspergillus fischerianus), this protein is Probable lysosomal cobalamin transporter.